The following is a 175-amino-acid chain: Lipopolysaccharide export system protein LptH (175 aa).

A signal peptide spans M1–A24.

Belongs to the LptA family. In terms of assembly, component of the lipopolysaccharide transport and assembly complex. Mainly exists as a dimer in solution. Tends to oligomerize already in solution. The protomers follow one another in a head-to-tail fashion throughout the crystal lattice, yielding a continuous fiber arrangement.

The protein localises to the periplasm. Its function is as follows. Involved in the assembly of lipopolysaccharide (LPS). Required for the translocation of LPS from the inner membrane to the outer membrane. May form a bridge between the inner membrane and the outer membrane, via interactions with LptC and LptD, thereby facilitating LPS transfer across the periplasm. Binds LPS. Important for cell envelope stability and essential for growth, cell viability and ability to cause infection in different animal models. The protein is Lipopolysaccharide export system protein LptH of Pseudomonas aeruginosa (strain ATCC 15692 / DSM 22644 / CIP 104116 / JCM 14847 / LMG 12228 / 1C / PRS 101 / PAO1).